A 738-amino-acid polypeptide reads, in one-letter code: MQKKVVQSASKNEELDPHYKRSSVPFPYGLPDYDAEYQFINHHMQQLLTRPVEGTHSASVHPSTSSTSHISSPSAFSVQNPNPNDAPFVGNIGLDASGFSSGGMSEYYPRSVSMQQSQDVHFQNTEIPYYHRSPSSDSFSPGVVASVNPNSNNSPTFYSNPPALSNIPIPLNNSPYRPEDAYFQLQGAGVKADINPYNLSPYSQYGPEGTAYSNAQAHHQDGAPLQRVCSAPDPPKTSMPPFGSAGSPSPNRSLNVSNNTTPPLSTVNKIIKKPKATTGKVKKRLPQAKRACAKCQKDNKKCDDARPCQRCIKAKTDCIDLPRKKRPTGVRRGPYKKLSDTSNNTKSTTASSGHSTQDSLSSKMLDPSSDNQFAMSSRQMDENGMAQYPSSAIKQELNLQPQILVSSASKNFQPNVTPPFAVHHDHFNSTSMDGVAVSNMDETGTSSAGSKPFNRKSRNRSFTNPVGMTEEHFLREYAQHSVANPSLLIHQIHGLPSEQVHGLLSHTELGNAMHNQPTYNESSIAAENVNNWMLETNDHENLSMQSHFEVPDLKMNHHDSSFFDRHIDQTAMPGQNQHGTVKNMETMHHFYPDVHNSEFPAAPNPVKSQVPYYYQSQAADDEEEDVPDHQPSWRGRIHSFSIATDSSQHVVERPCIHSLRGIHGQQDGGLEQHDGDHVNMLPDTHAEELAYTSMLLFHDIPTRDIRPDFNVHELVDHGTYPNFHQNQADSFKNHPFRQ.

A compositionally biased stretch (polar residues) spans 1 to 10 (MQKKVVQSAS). Disordered regions lie at residues 1-23 (MQKKVVQSASKNEELDPHYKRSS), 53-83 (EGTHSASVHPSTSSTSHISSPSAFSVQNPNP), and 219-266 (HQDG…PLST). The segment covering 55 to 77 (THSASVHPSTSSTSHISSPSAFS) has biased composition (low complexity). Residues 246-266 (GSPSPNRSLNVSNNTTPPLST) are compositionally biased toward polar residues. Phosphothreonine occurs at positions 260 and 261. Positions 292–318 (CAKCQKDNKKCDDARPCQRCIKAKTDC) form a DNA-binding region, zn(2)-C6 fungal-type. Positions 323-335 (RKKRPTGVRRGPY) are enriched in basic residues. 2 disordered regions span residues 323–372 (RKKR…SDNQ) and 441–464 (DETGTSSAGSKPFNRKSRNRSFTN). Residues 340–352 (DTSNNTKSTTASS) are compositionally biased toward low complexity. Positions 353–372 (GHSTQDSLSSKMLDPSSDNQ) are enriched in polar residues.

The protein localises to the cytoplasm. The protein resides in the nucleus. This is an uncharacterized protein from Schizosaccharomyces pombe (strain 972 / ATCC 24843) (Fission yeast).